Reading from the N-terminus, the 264-residue chain is 3-methyl-2-oxobutanoate hydroxymethyltransferase (264 aa).

Mg(2+) is bound by residues D45 and D84. 3-methyl-2-oxobutanoate contacts are provided by residues D45–S46, D84, and K112. Residue E114 coordinates Mg(2+). E181 (proton acceptor) is an active-site residue.

Belongs to the PanB family. Homodecamer; pentamer of dimers. It depends on Mg(2+) as a cofactor.

Its subcellular location is the cytoplasm. The catalysed reaction is 3-methyl-2-oxobutanoate + (6R)-5,10-methylene-5,6,7,8-tetrahydrofolate + H2O = 2-dehydropantoate + (6S)-5,6,7,8-tetrahydrofolate. It participates in cofactor biosynthesis; (R)-pantothenate biosynthesis; (R)-pantoate from 3-methyl-2-oxobutanoate: step 1/2. Functionally, catalyzes the reversible reaction in which hydroxymethyl group from 5,10-methylenetetrahydrofolate is transferred onto alpha-ketoisovalerate to form ketopantoate. This is 3-methyl-2-oxobutanoate hydroxymethyltransferase from Escherichia coli O1:K1 / APEC.